We begin with the raw amino-acid sequence, 213 residues long: Protein-L-isoaspartate O-methyltransferase (213 aa).

The active site involves S64.

The protein belongs to the methyltransferase superfamily. L-isoaspartyl/D-aspartyl protein methyltransferase family.

Its subcellular location is the cytoplasm. The catalysed reaction is [protein]-L-isoaspartate + S-adenosyl-L-methionine = [protein]-L-isoaspartate alpha-methyl ester + S-adenosyl-L-homocysteine. In terms of biological role, catalyzes the methyl esterification of L-isoaspartyl residues in peptides and proteins that result from spontaneous decomposition of normal L-aspartyl and L-asparaginyl residues. It plays a role in the repair and/or degradation of damaged proteins. The chain is Protein-L-isoaspartate O-methyltransferase from Flavobacterium johnsoniae (strain ATCC 17061 / DSM 2064 / JCM 8514 / BCRC 14874 / CCUG 350202 / NBRC 14942 / NCIMB 11054 / UW101) (Cytophaga johnsonae).